A 1204-amino-acid chain; its full sequence is MPQFTKEQEKAINDRGHDILVSASAGSGKTTVLVERVLKEILAGTQVDELLVVTFTKAAAEEMKTRIKAALTKEMAKPGVDYRYLREQLNQIDTANISTIDAFCLDVIHRFYYSIELDPSFTILTDDTQATLLKERALREIEGEMLTSKDKAFRHFYDNFAGDRDADSPRDLLLDLYNFAMAKPEYKKWLAQLPQIYEIEDSVIGSKIWQKQIKPYIATKFSKLQEKIASYLTQAIMETKELAKVKESFTLFAQNLNNFVQAVKEDDDYDKQRELLRSCVFTINFRKSKKWDEDLLEFYNEIQSLKDEAKSQVFDTFTSFYAVTEKEQIKIMQESQKIVTAISTAEIKLIERFNQLKRNENLLDYSDMEQLAYQILSQDTSSSQMARDFYQNKFKEILIDEYQDINALQERIIQQIKSEKKNTLFMVGDVKQSIYGFRQAEPSLFLQKYHQFAEDENEHEERILLSDNFRSTEPVTQTVNAVFKSILSTDFGGIDYQKEGQLIFGAKYYPKSLPQASEVIVHEKKNNNEKSENEIDFSEIQMVLARIKQLEDEHVQIFDSNTGKMRDMEYSDIAILTRSRSDNLEIMQEFAKQDIPLFVTDAENYFQTFELTVMMNYLKIIDNPDQDIPLVTVLRSPLFNFDEKELAKIRIKSKNSNFYSALTSYVGTNDVLSKKCKNFLNQLAELRSFATTHRISELIWSIYERTNLLEIMTALPNGEQRRVNLEALYERATSYESAGFKGLYQFINFIDRMRRSQKDLAQPLLTKEAGNAVRLMTIHGSKGLEFPIVFYVGMQHHYQMRDLNGNYIINSDSMGITLREQNYRVDSLVKAMGNITKKQQLLEEEARILYVALTRAKQKLILVGDVPSFNKKVKEWSTELNHAGQLPLINKLSATSPLSFIGPSLRFDRHVAIKLNDITKSIDQSQKILFIDYQDEDTKFIKKDEDTDNQNENTRKSALLTQTVNKLYQFNYPFRDASETTAYQAVSEIKKAFNDPIDAELENSHLLTSTNRYLQPIDTKPNFLYQTKFTGAEIGTATHLILQYYDYTNDSADNLDQEIATLIEQKKLNPDIVSSLNKDQIDWFVHGDFAKDFWKEPTNLKREVDFSSLLSARTLFKDFSDPDAKILVHGTIDGYFVAKNGIILFDYKTDHVNKTNIDKSIELIKEKYTGQLRLYEQALNEFSEKKVIGKYLILLDAKQVVEVK.

Residues 2-472 (PQFTKEQEKA…ILLSDNFRST (471 aa)) enclose the UvrD-like helicase ATP-binding domain. ATP is bound at residue 23–30 (ASAGSGKT). Residues 500-783 (GQLIFGAKYY…RLMTIHGSKG (284 aa)) form the UvrD-like helicase C-terminal domain.

It belongs to the helicase family. AddA subfamily. As to quaternary structure, heterodimer of AddA and AddB/RexB. Mg(2+) is required as a cofactor.

The catalysed reaction is Couples ATP hydrolysis with the unwinding of duplex DNA by translocating in the 3'-5' direction.. It catalyses the reaction ATP + H2O = ADP + phosphate + H(+). In terms of biological role, the heterodimer acts as both an ATP-dependent DNA helicase and an ATP-dependent, dual-direction single-stranded exonuclease. Recognizes the chi site generating a DNA molecule suitable for the initiation of homologous recombination. The AddA nuclease domain is required for chi fragment generation; this subunit has the helicase and 3' -&gt; 5' nuclease activities. This is ATP-dependent helicase/nuclease subunit A from Lactobacillus helveticus (strain DPC 4571).